The sequence spans 174 residues: Large ribosomal subunit protein uL16 (174 aa).

This sequence belongs to the universal ribosomal protein uL16 family.

This is Large ribosomal subunit protein uL16 from Methanocaldococcus jannaschii (strain ATCC 43067 / DSM 2661 / JAL-1 / JCM 10045 / NBRC 100440) (Methanococcus jannaschii).